A 264-amino-acid polypeptide reads, in one-letter code: S-adenosylmethionine decarboxylase proenzyme (264 aa).

The active-site Schiff-base intermediate with substrate; via pyruvic acid is Ser-112. Ser-112 carries the pyruvic acid (Ser); by autocatalysis modification. The active-site Proton acceptor; for processing activity is His-117. The active-site Proton donor; for catalytic activity is the Cys-140.

Belongs to the prokaryotic AdoMetDC family. Type 2 subfamily. As to quaternary structure, heterooctamer of four alpha and four beta chains arranged as a tetramer of alpha/beta heterodimers. The cofactor is pyruvate. In terms of processing, is synthesized initially as an inactive proenzyme. Formation of the active enzyme involves a self-maturation process in which the active site pyruvoyl group is generated from an internal serine residue via an autocatalytic post-translational modification. Two non-identical subunits are generated from the proenzyme in this reaction, and the pyruvate is formed at the N-terminus of the alpha chain, which is derived from the carboxyl end of the proenzyme. The post-translation cleavage follows an unusual pathway, termed non-hydrolytic serinolysis, in which the side chain hydroxyl group of the serine supplies its oxygen atom to form the C-terminus of the beta chain, while the remainder of the serine residue undergoes an oxidative deamination to produce ammonia and the pyruvoyl group blocking the N-terminus of the alpha chain.

It catalyses the reaction S-adenosyl-L-methionine + H(+) = S-adenosyl 3-(methylsulfanyl)propylamine + CO2. Its pathway is amine and polyamine biosynthesis; S-adenosylmethioninamine biosynthesis; S-adenosylmethioninamine from S-adenosyl-L-methionine: step 1/1. Catalyzes the decarboxylation of S-adenosylmethionine to S-adenosylmethioninamine (dcAdoMet), the propylamine donor required for the synthesis of the polyamines spermine and spermidine from the diamine putrescine. This Serratia proteamaculans (strain 568) protein is S-adenosylmethionine decarboxylase proenzyme.